Here is a 1126-residue protein sequence, read N- to C-terminus: Probable serine/threonine-protein kinase DDB_G0280111 (1126 aa).

Residues 16–295 (LNFVKQIAEG…NLLRNQQPLF (280 aa)) form the Protein kinase domain. ATP-binding positions include 22–30 (IAEGGFSYV) and Lys-45. Asp-147 acts as the Proton acceptor in catalysis. Low complexity predominate over residues 314-333 (NNNNNINNNNNNNIVNGKNI). Disordered stretches follow at residues 314 to 469 (NNNN…NGNN), 760 to 901 (LNLN…QQQQ), 944 to 1072 (TPSS…DEVR), and 1095 to 1126 (NKQS…GLLN). The span at 347–364 (TPTPPPPAPSQSPSPSPS) shows a compositional bias: pro residues. The span at 367 to 390 (VVNNIENNSNGLEHSNSNGNISQP) shows a compositional bias: polar residues. Composition is skewed to low complexity over residues 413 to 422 (PPNNSNNSFD), 432 to 469 (NLSN…NGNN), and 760 to 795 (LNLN…LNSS). Composition is skewed to polar residues over residues 796 to 825 (FDNI…SESG) and 833 to 845 (EPTS…YQQS). Low complexity predominate over residues 846 to 856 (NNNNNNNNNNN). The segment covering 857 to 866 (GTPISLTPGS) has biased composition (polar residues). 3 stretches are compositionally biased toward low complexity: residues 886-901 (QQQQ…QQQQ), 953-971 (PSTG…QQSQ), and 1003-1035 (NVNI…NPNL). Polar residues predominate over residues 1095-1105 (NKQSRMNNPNN). Residues 1108–1126 (DEGDSGFGDGEEEDEGLLN) show a composition bias toward acidic residues.

The protein belongs to the protein kinase superfamily. Ser/Thr protein kinase family.

It catalyses the reaction L-seryl-[protein] + ATP = O-phospho-L-seryl-[protein] + ADP + H(+). The catalysed reaction is L-threonyl-[protein] + ATP = O-phospho-L-threonyl-[protein] + ADP + H(+). This Dictyostelium discoideum (Social amoeba) protein is Probable serine/threonine-protein kinase DDB_G0280111.